Here is a 128-residue protein sequence, read N- to C-terminus: MSKEKTPRALKDNEAKAVARMLRISPQKLNLLAQLIRGKKVERALAELEFSRKRAAFDVRKTLESAIANAENNHSLEVDDLVVAEAFVGKALVMKRFSPRARGRSGKIQKPFSHLTIVLREVAVAAQA.

Belongs to the universal ribosomal protein uL22 family. Part of the 50S ribosomal subunit.

In terms of biological role, this protein binds specifically to 23S rRNA; its binding is stimulated by other ribosomal proteins, e.g. L4, L17, and L20. It is important during the early stages of 50S assembly. It makes multiple contacts with different domains of the 23S rRNA in the assembled 50S subunit and ribosome. The globular domain of the protein is located near the polypeptide exit tunnel on the outside of the subunit, while an extended beta-hairpin is found that lines the wall of the exit tunnel in the center of the 70S ribosome. This chain is Large ribosomal subunit protein uL22, found in Methylocella silvestris (strain DSM 15510 / CIP 108128 / LMG 27833 / NCIMB 13906 / BL2).